The primary structure comprises 226 residues: Cobalt transport protein CbiM 1 (226 aa).

The next 6 membrane-spanning stretches (helical) occupy residues 6 to 26, 43 to 63, 75 to 95, 107 to 127, 135 to 155, and 181 to 201; these read GFLP…VVAY, MLLG…MPSV, LGAI…VLLF, TLGA…AAVF, FPFG…TYVT, and VFAL…VVVM.

It belongs to the CbiM family. As to quaternary structure, forms an energy-coupling factor (ECF) transporter complex composed of an ATP-binding protein (A component, CbiO), a transmembrane protein (T component, CbiQ) and 2 possible substrate-capture proteins (S components, CbiM and CbiN) of unknown stoichimetry.

The protein resides in the cell inner membrane. The protein operates within cofactor biosynthesis; adenosylcobalamin biosynthesis. Its function is as follows. Part of the energy-coupling factor (ECF) transporter complex CbiMNOQ involved in cobalt import. The chain is Cobalt transport protein CbiM 1 (cbim1) from Pelobacter propionicus (strain DSM 2379 / NBRC 103807 / OttBd1).